Consider the following 409-residue polypeptide: Chaetoglobosin A biosynthesis cluster protein C (409 aa).

Residues 51 to 120 enclose the HTH CENPB-type domain; that stretch reads DLPANSRKLT…VKRQPQLRTR (70 aa). Residues 84-113 constitute a DNA-binding region (H-T-H motif); the sequence is RGVEDMANHLLRERDAPPVGKLWAHNFVKR. Disordered stretches follow at residues 243 to 269 and 320 to 350; these read PTHP…ETRS and ANEP…QDPL. The span at 255–269 shows a compositional bias: polar residues; the sequence is PWASKTPYNAQETRS.

It is found in the nucleus. Its function is as follows. Part of the gene cluster that mediates the biosynthesis of chaetoglobosin A which has a unique inhibitory activity against actin polymerization in mammalian cells. Chaetoglobosin A and its intermediates are involved in the morphological differentiation of C.globosum. The first step of the pathway is the synthesis of prochaetoglobosin I via condensation of one acetyl-CoA, 8 malonyl-CoA, and a L-tryptophan molecule by the PKS-NRPS hybrid synthetase cheA, followed by reduction of backbone double bond to install desired geometry by the enoyl reductase cheB. Further multiple oxidation steps performed by the cytochrome P450 monooxygenases cheE and cheG, as well as by the FAD-linked oxidoreductase cheF, lead to the formation of chaetoglobosin A. Depending on the order of action of these reductases, distinct intermediates can be identified. Within the pathway, the cytochrome P450 monooxygenase cheE catalyzes a stereospecific epoxidation on prochaetoglobosin I, cytoglobosin D, and chaetoglobosin J intermediates. The FAD-linked oxidoreductase cheF performs dehydrogenation of the C-20 hydroxyl groups in the 20-dihyrochaetoglobosin A and cytoglobosin D intermediates. Finally, the cytochrome P450 monooxygenase cheG can catalyze the stereospecific dihydroxylation of prochaetoglobosin I and prochaetoglobosin IV at C-19 and C-20, respectively. The Diels-Alderase cheD may play a role in the post-PKS-NRPS biosynthetic steps catalyzing Diels-Alder cyclization. This chain is Chaetoglobosin A biosynthesis cluster protein C, found in Chaetomium globosum (strain ATCC 6205 / CBS 148.51 / DSM 1962 / NBRC 6347 / NRRL 1970) (Soil fungus).